The sequence spans 467 residues: Transcriptional modulator WTM2 (467 aa).

Low complexity predominate over residues 1 to 12 (MAKSKSSQGASG). 2 disordered regions span residues 1 to 22 (MAKSKSSQGASGARRKPAPSLY) and 84 to 121 (TFYDDDDDDDNDDDDEEGNGKTKSAATPNPEYGDAFQD). Positions 87 to 100 (DDDDDDDNDDDDEE) are enriched in acidic residues. 3 WD repeats span residues 244–282 (PGTNVAHSVRFFNNHLFASCSDDNILRFWDTRTADKPLW), 287–327 (PKNG…LATT), and 349–389 (SGGD…SRND).

In terms of biological role, transcriptional modulator with roles in meiotic regulation and silencing. The chain is Transcriptional modulator WTM2 (WTM2) from Saccharomyces cerevisiae (strain ATCC 204508 / S288c) (Baker's yeast).